Here is a 151-residue protein sequence, read N- to C-terminus: Large ribosomal subunit protein uL15 (151 aa).

A disordered region spans residues 1-51; sequence MPLKIEDLKPTPGSRKPKKRLGRGIGSGLGKTAGKGHKGEKARGRGKIGRT. Residues 23–33 show a composition bias toward gly residues; it reads RGIGSGLGKTA.

The protein belongs to the universal ribosomal protein uL15 family. In terms of assembly, part of the 50S ribosomal subunit.

Its function is as follows. Binds to the 23S rRNA. The protein is Large ribosomal subunit protein uL15 of Petrotoga mobilis (strain DSM 10674 / SJ95).